We begin with the raw amino-acid sequence, 486 residues long: Malonate-semialdehyde dehydrogenase (486 aa).

Phe-154, Lys-178, Glu-181, Arg-182, and Ser-231 together coordinate NAD(+). The Nucleophile role is filled by Cys-286. Position 386 (Glu-386) interacts with NAD(+).

The protein belongs to the aldehyde dehydrogenase family. IolA subfamily. Homotetramer.

The enzyme catalyses 3-oxopropanoate + NAD(+) + CoA + H2O = hydrogencarbonate + acetyl-CoA + NADH + H(+). It carries out the reaction 2-methyl-3-oxopropanoate + NAD(+) + CoA + H2O = propanoyl-CoA + hydrogencarbonate + NADH + H(+). Its pathway is polyol metabolism; myo-inositol degradation into acetyl-CoA; acetyl-CoA from myo-inositol: step 7/7. Its function is as follows. Catalyzes the oxidation of malonate semialdehyde (MSA) and methylmalonate semialdehyde (MMSA) into acetyl-CoA and propanoyl-CoA, respectively. Is involved in a myo-inositol catabolic pathway. Bicarbonate, and not CO2, is the end-product of the enzymatic reaction. This chain is Malonate-semialdehyde dehydrogenase, found in Bacillus cereus (strain ATCC 14579 / DSM 31 / CCUG 7414 / JCM 2152 / NBRC 15305 / NCIMB 9373 / NCTC 2599 / NRRL B-3711).